The primary structure comprises 122 residues: Large ribosomal subunit protein uL14 (122 aa).

The protein belongs to the universal ribosomal protein uL14 family. In terms of assembly, part of the 50S ribosomal subunit. Forms a cluster with proteins L3 and L19. In the 70S ribosome, L14 and L19 interact and together make contacts with the 16S rRNA in bridges B5 and B8.

Binds to 23S rRNA. Forms part of two intersubunit bridges in the 70S ribosome. This is Large ribosomal subunit protein uL14 from Pseudothermotoga lettingae (strain ATCC BAA-301 / DSM 14385 / NBRC 107922 / TMO) (Thermotoga lettingae).